Here is a 126-residue protein sequence, read N- to C-terminus: MALNKAEILDAIAGMTVLELSELIKEMEEKFGVSAAAAAVAVAAPAAGGAAAAAEEQTEFTVVLVEAGANKVSVIKAVRELTGLGLKEAKDLVDGAPKPVKEALPKADAEAAKKKLEEAGAKVEVK.

The protein belongs to the bacterial ribosomal protein bL12 family. Homodimer. Part of the ribosomal stalk of the 50S ribosomal subunit. Forms a multimeric L10(L12)X complex, where L10 forms an elongated spine to which 2 to 4 L12 dimers bind in a sequential fashion. Binds GTP-bound translation factors.

Its function is as follows. Forms part of the ribosomal stalk which helps the ribosome interact with GTP-bound translation factors. Is thus essential for accurate translation. This is Large ribosomal subunit protein bL12 from Bordetella avium (strain 197N).